Here is a 212-residue protein sequence, read N- to C-terminus: Translation initiation factor IF-3 (212 aa).

The tract at residues 171 to 212 is disordered; the sequence is PKSASKKGHTPPKTQVEASKQANESAETEEEKKRCHPTKPVL. A compositionally biased stretch (polar residues) spans 182-195; that stretch reads PKTQVEASKQANES.

Belongs to the IF-3 family. As to quaternary structure, monomer.

It localises to the cytoplasm. Functionally, IF-3 binds to the 30S ribosomal subunit and shifts the equilibrium between 70S ribosomes and their 50S and 30S subunits in favor of the free subunits, thus enhancing the availability of 30S subunits on which protein synthesis initiation begins. This Porphyromonas gingivalis (strain ATCC 33277 / DSM 20709 / CIP 103683 / JCM 12257 / NCTC 11834 / 2561) protein is Translation initiation factor IF-3.